We begin with the raw amino-acid sequence, 352 residues long: Pollen-specific protein SF21 (352 aa).

It belongs to the NDRG family. As to expression, pollen.

In Helianthus annuus (Common sunflower), this protein is Pollen-specific protein SF21 (SF21).